Here is a 148-residue protein sequence, read N- to C-terminus: Deoxyuridine 5'-triphosphate nucleotidohydrolase (148 aa).

Substrate contacts are provided by residues 67 to 69 (RSG), asparagine 80, 84 to 86 (LID), and methionine 94.

Belongs to the dUTPase family. Mg(2+) serves as cofactor.

The enzyme catalyses dUTP + H2O = dUMP + diphosphate + H(+). It functions in the pathway pyrimidine metabolism; dUMP biosynthesis; dUMP from dCTP (dUTP route): step 2/2. In terms of biological role, this enzyme is involved in nucleotide metabolism: it produces dUMP, the immediate precursor of thymidine nucleotides and it decreases the intracellular concentration of dUTP so that uracil cannot be incorporated into DNA. The polypeptide is Deoxyuridine 5'-triphosphate nucleotidohydrolase (Burkholderia thailandensis (strain ATCC 700388 / DSM 13276 / CCUG 48851 / CIP 106301 / E264)).